Consider the following 505-residue polypeptide: Flagellin (505 aa).

The protein belongs to the bacterial flagellin family.

It localises to the secreted. The protein resides in the bacterial flagellum. Functionally, flagellin is the subunit protein which polymerizes to form the filaments of bacterial flagella. The protein is Flagellin (fliC) of Salmonella montevideo.